A 495-amino-acid chain; its full sequence is Calcium-dependent protein kinase 11 (495 aa).

The Protein kinase domain occupies 26–284 (YLLGKKLGQG…AHEALCHPWI (259 aa)). ATP is bound by residues 32–40 (LGQGQFGTT) and Lys55. The active-site Proton acceptor is Asp150. Ser190 bears the Phosphoserine mark. Residues 290–320 (APDKPLDPAVLSRLKQFSQMNKIKKMALRVI) form an autoinhibitory domain region. 4 consecutive EF-hand domains span residues 327 to 362 (EEIG…VGSE), 363 to 398 (LMES…MNKM), 399 to 434 (EREE…FGLC), and 438 to 468 (LDDM…GDGV). Ca(2+) contacts are provided by Asp340, Asp342, Ser344, Thr346, Glu351, Asp376, Asp378, Ser380, Thr382, Glu387, Asp412, Asp414, Ser416, Tyr418, Glu423, Asp446, Asp448, Asp450, Lys452, and Glu457.

Belongs to the protein kinase superfamily. Ser/Thr protein kinase family. CDPK subfamily. As to quaternary structure, interacts with Di19.

It is found in the cytoplasm. The protein localises to the nucleus. It catalyses the reaction L-seryl-[protein] + ATP = O-phospho-L-seryl-[protein] + ADP + H(+). The catalysed reaction is L-threonyl-[protein] + ATP = O-phospho-L-threonyl-[protein] + ADP + H(+). Activated by calcium. Autophosphorylation may play an important role in the regulation of the kinase activity. Functionally, may play a role in signal transduction pathways that involve calcium as a second messenger. Functions as a regulator of the calcium-mediated abscisic acid (ABA) signaling pathway. Phosphorylates ABA-responsive transcription factors ABF1 and ABF4 in vitro. The sequence is that of Calcium-dependent protein kinase 11 (CPK11) from Arabidopsis thaliana (Mouse-ear cress).